Reading from the N-terminus, the 362-residue chain is S-adenosylmethionine decarboxylase proenzyme (362 aa).

Active-site residues include E11 and E14. The active-site Schiff-base intermediate with substrate; via pyruvic acid is the S71. S71 is subject to Pyruvic acid (Ser); by autocatalysis. C85 (proton donor; for catalytic activity) is an active-site residue. Catalysis depends on proton acceptor; for processing activity residues S234 and H247.

The protein belongs to the eukaryotic AdoMetDC family. Pyruvate serves as cofactor. Is synthesized initially as an inactive proenzyme. Formation of the active enzyme involves a self-maturation process in which the active site pyruvoyl group is generated from an internal serine residue via an autocatalytic post-translational modification. Two non-identical subunits are generated from the proenzyme in this reaction, and the pyruvate is formed at the N-terminus of the alpha chain, which is derived from the carboxyl end of the proenzyme. The post-translation cleavage follows an unusual pathway, termed non-hydrolytic serinolysis, in which the side chain hydroxyl group of the serine supplies its oxygen atom to form the C-terminus of the beta chain, while the remainder of the serine residue undergoes an oxidative deamination to produce ammonia and the pyruvoyl group blocking the N-terminus of the alpha chain.

It carries out the reaction S-adenosyl-L-methionine + H(+) = S-adenosyl 3-(methylsulfanyl)propylamine + CO2. It functions in the pathway amine and polyamine biosynthesis; S-adenosylmethioninamine biosynthesis; S-adenosylmethioninamine from S-adenosyl-L-methionine: step 1/1. This Ipomoea nil (Japanese morning glory) protein is S-adenosylmethionine decarboxylase proenzyme (SAMDC).